The primary structure comprises 337 residues: 3-isopropylmalate dehydrogenase (337 aa).

The substrate site is built by R86, R96, R117, and D201. Residues D201, D225, and D229 each contribute to the Mg(2+) site. 258 to 270 (GAAFDIAGKNIGN) contacts NAD(+).

Belongs to the isocitrate and isopropylmalate dehydrogenases family. As to quaternary structure, homotetramer. It depends on Mg(2+) as a cofactor. The cofactor is Mn(2+).

It is found in the cytoplasm. It catalyses the reaction (2R,3S)-3-isopropylmalate + NAD(+) = 4-methyl-2-oxopentanoate + CO2 + NADH. Its pathway is amino-acid biosynthesis; L-leucine biosynthesis; L-leucine from 3-methyl-2-oxobutanoate: step 3/4. Catalyzes the oxidation of 3-carboxy-2-hydroxy-4-methylpentanoate (3-isopropylmalate) to 3-carboxy-4-methyl-2-oxopentanoate. The product decarboxylates to 4-methyl-2 oxopentanoate. The chain is 3-isopropylmalate dehydrogenase (leuB) from Sulfurisphaera tokodaii (strain DSM 16993 / JCM 10545 / NBRC 100140 / 7) (Sulfolobus tokodaii).